The following is a 253-amino-acid chain: Imidazole glycerol phosphate synthase subunit HisF (253 aa).

Catalysis depends on residues Asp-11 and Asp-130.

This sequence belongs to the HisA/HisF family. Heterodimer of HisH and HisF.

Its subcellular location is the cytoplasm. The catalysed reaction is 5-[(5-phospho-1-deoxy-D-ribulos-1-ylimino)methylamino]-1-(5-phospho-beta-D-ribosyl)imidazole-4-carboxamide + L-glutamine = D-erythro-1-(imidazol-4-yl)glycerol 3-phosphate + 5-amino-1-(5-phospho-beta-D-ribosyl)imidazole-4-carboxamide + L-glutamate + H(+). It participates in amino-acid biosynthesis; L-histidine biosynthesis; L-histidine from 5-phospho-alpha-D-ribose 1-diphosphate: step 5/9. Functionally, IGPS catalyzes the conversion of PRFAR and glutamine to IGP, AICAR and glutamate. The HisF subunit catalyzes the cyclization activity that produces IGP and AICAR from PRFAR using the ammonia provided by the HisH subunit. This chain is Imidazole glycerol phosphate synthase subunit HisF, found in Thermotoga sp. (strain RQ2).